Reading from the N-terminus, the 337-residue chain is Putative 2-aminoethylphosphonate-binding periplasmic protein (337 aa).

The signal sequence occupies residues 1–21 (MKLSRLALLSVFALASAPSWA).

This sequence belongs to the bacterial solute-binding protein 1 family.

The protein localises to the periplasm. Its function is as follows. Probably part of the PhnSTUV complex (TC 3.A.1.11.5) involved in 2-aminoethylphosphonate import. The chain is Putative 2-aminoethylphosphonate-binding periplasmic protein (phnS) from Salmonella typhi.